Consider the following 397-residue polypeptide: Mannonate dehydratase (397 aa).

It belongs to the mannonate dehydratase family. Requires Fe(2+) as cofactor. Mn(2+) is required as a cofactor.

It carries out the reaction D-mannonate = 2-dehydro-3-deoxy-D-gluconate + H2O. Its pathway is carbohydrate metabolism; pentose and glucuronate interconversion. In terms of biological role, catalyzes the dehydration of D-mannonate. The sequence is that of Mannonate dehydratase from Saccharophagus degradans (strain 2-40 / ATCC 43961 / DSM 17024).